Reading from the N-terminus, the 144-residue chain is Mannitol-specific phosphotransferase enzyme IIA component (144 aa).

One can recognise a PTS EIIA type-2 domain in the interval 3-142 (ELFSNDNIFL…EEIKQVFEEA (140 aa)). His-63 (tele-phosphohistidine intermediate) is an active-site residue. Position 63 is a phosphohistidine; by HPr (His-63).

In terms of assembly, homodimer or homotrimer. Seems to be a monomer when not phosphorylated.

Its subcellular location is the cytoplasm. Functionally, the phosphoenolpyruvate-dependent sugar phosphotransferase system (sugar PTS), a major carbohydrate active transport system, catalyzes the phosphorylation of incoming sugar substrates concomitantly with their translocation across the cell membrane. The enzyme II CmtAB PTS system is involved in D-mannitol transport. The sequence is that of Mannitol-specific phosphotransferase enzyme IIA component (mtlF) from Staphylococcus aureus (strain COL).